A 96-amino-acid polypeptide reads, in one-letter code: UPF0235 protein VP2619 (96 aa).

The protein belongs to the UPF0235 family.

In Vibrio parahaemolyticus serotype O3:K6 (strain RIMD 2210633), this protein is UPF0235 protein VP2619.